Consider the following 377-residue polypeptide: Apelin receptor (377 aa).

The Extracellular portion of the chain corresponds to 1-28 (MEDDGYNYYGADNQSECDYADWKPSGAL). N-linked (GlcNAc...) asparagine glycosylation occurs at Asn-13. Cystine bridges form between Cys-17/Cys-279 and Cys-100/Cys-179. The helical transmembrane segment at 29–52 (IPAIYMLVFLLGTTGNGLVLWTVF) threads the bilayer. At 53 to 62 (RTSREKRRSA) the chain is on the cytoplasmic side. The chain crosses the membrane as a helical span at residues 63–84 (DIFIASLAVADLTFVVTLPLWA). Residues 85 to 97 (TYTYREFDWPFGT) lie on the Extracellular side of the membrane. Residues 98-123 (FSCKLSSYLIFVNMYASVFCLTGLSF) form a helical membrane-spanning segment. At 124–144 (DRYLAIVRPVANARLRLRVSG) the chain is on the cytoplasmic side. The chain crosses the membrane as a helical span at residues 145-162 (AVATAVLWVLAALLAVPV). Topologically, residues 163–196 (MVFRSTDASENGTKIQCYMDYSMVATSNSEWAWE) are extracellular. N-linked (GlcNAc...) asparagine glycosylation occurs at Asn-173. Residues 197 to 221 (VGLGVSSTAVGFVVPFTIMLTCYFF) form a helical membrane-spanning segment. Topologically, residues 222–244 (IAQTIAGHFRKERIEGLRKRRRL) are cytoplasmic. Residues 245–268 (LSIIVVLVVTFALCWMPYHLVKTL) form a helical membrane-spanning segment. Over 269–287 (YMLGSLLHWPCDFDIFLMN) the chain is Extracellular. Residues 288–310 (VFPYCTCISYVNSCLNPFLYAFF) form a helical membrane-spanning segment. The Cytoplasmic portion of the chain corresponds to 311-377 (DPRFRQACTS…IPYSQETLVD (67 aa)). A disordered region spans residues 334–377 (HSSSAEKSASYSSGHSQGPGPNMGKGGEQMHEKSIPYSQETLVD). The span at 335–349 (SSSAEKSASYSSGHS) shows a compositional bias: low complexity.

This sequence belongs to the G-protein coupled receptor 1 family. In terms of assembly, homodimer; dimerization inhibits APLNR-mediated G protein and beta-arrestin signaling pathways compared to monomeric APLNR. Expressed in coronary endothelial cells (at protein level). Expressed in the embryo, allantoic and endothelial precursor cells of the yolk sac at 8 days post-coitum (dpc). Expressed in the secondary heart field and somite at 8.25 dpc. Expressed in fetal allantoic endothelial cells at 9 dpc. Expressed in the allantoid and the invading fetal vasculature of the placenta at 9.5 dpc. Expressed in endothelial cells adjacent to syncytiotrophoblast cells at 10.5 dpc. Expressed weakly in the embryonic heart at 11.5 dpc. Expressed in the adult heart. Expressed in endothelial cells and cardiomyocytes and weakly expressed in fibroblasts.

It is found in the cell membrane. In terms of biological role, g protein-coupled receptor for peptide hormones apelin (APLN) and apelin receptor early endogenous ligand (APELA), that plays a role in the regulation of normal cardiovascular function and fluid homeostasis. When acting as apelin receptor, activates both G(i) protein pathway that inhibits adenylate cyclase activity, and the beta-arrestin pathway leading to internalization of the receptor. APLNR/APJ receptor is also activated by mechanical strech in a G-protein-independent fashion to induce beta-arrestin signaling leading to cardiac hypertrophy. However, the presence of apelin ligand blunts cardiac hypertrophic induction from APLNR/APJ on response to pathological stimuli. Plays a key role in early development such as gastrulation, blood vessels formation and heart morphogenesis by acting as a receptor for APELA hormone. May promote angioblast migration toward the embryonic midline, i.e. the position of the future vessel formation, during vasculogenesis. Promotes sinus venosus (SV)-derived endothelial cells migration into the developing heart to promote coronary blood vessel development. Also plays a role in various processes in adults such as regulation of blood vessel formation, blood pressure and heart contractility and protection from cardiac hypertrophy and heart failure. The sequence is that of Apelin receptor from Mus musculus (Mouse).